We begin with the raw amino-acid sequence, 298 residues long: Proton-activated chloride channel (298 aa).

The Cytoplasmic portion of the chain corresponds to 1-12; that stretch reads MPIGFNKACLKN. A helical membrane pass occupies residues 13-33; it reads VFTVILVLIYLALTAVAVFLA. Topologically, residues 34–245 are extracellular; sequence YQTISDFMDK…RDPFIQQVKD (212 aa). The chain crosses the membrane as a helical span at residues 246 to 266; that stretch reads IVTANPWNTIAILCGVFMALF. Residues 267-298 lie on the Cytoplasmic side of the membrane; the sequence is KAADFAKLSIKWMIRIRKRHIRAKMREMNQIS.

This sequence belongs to the proton-activated chloride channel family.

It is found in the cell membrane. It carries out the reaction chloride(in) = chloride(out). In terms of biological role, chloride channel gated by pH that facilitates the entry of chloride ions into cells upon exposure to extracellular acidic pH. Displays channel activity with distinct kinetic properties compared to the human ortholog channel. The chain is Proton-activated chloride channel from Danio rerio (Zebrafish).